Consider the following 137-residue polypeptide: NADH-quinone oxidoreductase subunit A (137 aa).

Helical transmembrane passes span 12-32, 66-86, and 95-115; these read WGFA…LGLS, FYLV…LFAW, and WTGF…LVYL.

It belongs to the complex I subunit 3 family. As to quaternary structure, NDH-1 is composed of 13 different subunits. Subunits NuoA, H, J, K, L, M, N constitute the membrane sector of the complex.

It localises to the cell inner membrane. It carries out the reaction a quinone + NADH + 5 H(+)(in) = a quinol + NAD(+) + 4 H(+)(out). Its function is as follows. NDH-1 shuttles electrons from NADH, via FMN and iron-sulfur (Fe-S) centers, to quinones in the respiratory chain. The immediate electron acceptor for the enzyme in this species is believed to be ubiquinone. Couples the redox reaction to proton translocation (for every two electrons transferred, four hydrogen ions are translocated across the cytoplasmic membrane), and thus conserves the redox energy in a proton gradient. This Pseudomonas savastanoi pv. phaseolicola (strain 1448A / Race 6) (Pseudomonas syringae pv. phaseolicola (strain 1448A / Race 6)) protein is NADH-quinone oxidoreductase subunit A.